The sequence spans 342 residues: Ribosomal RNA small subunit methyltransferase C (342 aa).

The protein belongs to the methyltransferase superfamily. RsmC family. As to quaternary structure, monomer.

It is found in the cytoplasm. The catalysed reaction is guanosine(1207) in 16S rRNA + S-adenosyl-L-methionine = N(2)-methylguanosine(1207) in 16S rRNA + S-adenosyl-L-homocysteine + H(+). Its function is as follows. Specifically methylates the guanine in position 1207 of 16S rRNA in the 30S particle. The sequence is that of Ribosomal RNA small subunit methyltransferase C from Salmonella heidelberg (strain SL476).